The sequence spans 425 residues: Protein CLP1 homolog (425 aa).

ATP contacts are provided by residues Glu18, Lys59, and 121–126 (DVGKST).

The protein belongs to the Clp1 family. Clp1 subfamily.

The protein resides in the nucleus. In terms of biological role, required for endonucleolytic cleavage during polyadenylation-dependent pre-mRNA 3'-end formation. This Drosophila ananassae (Fruit fly) protein is Protein CLP1 homolog (cbc).